Reading from the N-terminus, the 430-residue chain is Enolase (430 aa).

Position 163 (Gln163) interacts with (2R)-2-phosphoglycerate. Glu205 functions as the Proton donor in the catalytic mechanism. Residues Asp242, Glu287, and Asp314 each coordinate Mg(2+). Positions 339, 368, 369, and 390 each coordinate (2R)-2-phosphoglycerate. The active-site Proton acceptor is the Lys339.

It belongs to the enolase family. The cofactor is Mg(2+).

It localises to the cytoplasm. Its subcellular location is the secreted. The protein resides in the cell surface. It carries out the reaction (2R)-2-phosphoglycerate = phosphoenolpyruvate + H2O. Its pathway is carbohydrate degradation; glycolysis; pyruvate from D-glyceraldehyde 3-phosphate: step 4/5. Its function is as follows. Catalyzes the reversible conversion of 2-phosphoglycerate (2-PG) into phosphoenolpyruvate (PEP). It is essential for the degradation of carbohydrates via glycolysis. The polypeptide is Enolase (Clostridioides difficile (strain 630) (Peptoclostridium difficile)).